Here is a 1719-residue protein sequence, read N- to C-terminus: Chromodomain-helicase-DNA-binding protein 1 (1719 aa).

Basic and acidic residues predominate over residues 1-10 (MNGHSDEESV). A disordered region spans residues 1-249 (MNGHSDEESV…EAEETKTDSD (249 aa)). A compositionally biased stretch (low complexity) spans 34–62 (SSGSSSDGSSSQSGSSDSESGSESGSQSE). Over residues 66–85 (DTSREKKQVQAKPPKADGSE) the composition is skewed to basic and acidic residues. A compositionally biased stretch (low complexity) spans 103-116 (KKQQQQQKAASSDS). Positions 117–133 (GSEEDSSSSEDSADDSS) are enriched in acidic residues. The span at 149 to 160 (SGSGSVSGTGSD) shows a compositional bias: low complexity. Residues 161–178 (SESEEDGDKSSCEESESD) show a composition bias toward acidic residues. Basic residues predominate over residues 184–207 (KVKSRKPPSRIKPKSGKKSTGQKK). A compositionally biased stretch (acidic residues) spans 212-222 (SSEEEEDDDED). A compositionally biased stretch (basic and acidic residues) spans 239 to 248 (KEAEETKTDS). Chromo domains follow at residues 268 to 360 (ETIE…RWLK) and 385 to 448 (QIVE…TPFK). The Helicase ATP-binding domain occupies 489–659 (AHSWCKGNSC…WSLLHFIMPE (171 aa)). 502–509 (DEMGLGKT) is a binding site for ATP. The DEAH box signature appears at 610–613 (DEAH). A Helicase C-terminal domain is found at 788-939 (LLDKLLIRLR…HLVIQRMDTT (152 aa)). Disordered stretches follow at residues 1076–1116 (ISFN…TIPR), 1319–1393 (QRLA…TPVH), and 1503–1719 (KKRQ…SRKT). Basic residues-rich tracts occupy residues 1103-1113 (KRPKKRGRPRT) and 1327-1342 (SKRR…MKAS). A compositionally biased stretch (basic and acidic residues) spans 1369 to 1380 (NKVNEIKSENKE). A CHD1 helical C-terminal domain (CHCT) region spans residues 1410-1512 (LDQKTFSVCK…KKRQESQQHN (103 aa)). Polar residues predominate over residues 1511–1524 (HNDQNISSNVNTHV). Basic and acidic residues-rich tracts occupy residues 1526–1576 (RNPD…DSRK), 1585–1673 (GKDH…DHRA), and 1698–1710 (SPFE…KSTP).

The protein belongs to the SNF2/RAD54 helicase family. In terms of assembly, component of the SAGA complex. Interacts with SSRP1.

The protein resides in the nucleus. The protein localises to the chromosome. Its subcellular location is the centromere. It catalyses the reaction ATP + H2O = ADP + phosphate + H(+). Functionally, ATP-dependent chromatin-remodeling factor which functions as substrate recognition component of the transcription regulatory histone acetylation (HAT) complex SAGA. Regulates polymerase II transcription. Also required for efficient transcription by RNA polymerase I, and more specifically the polymerase I transcription termination step. Regulates negatively DNA replication. Not only involved in transcription-related chromatin remodeling, but also required to maintain a specific chromatin configuration across the genome. Required for maintaining open chromatin and pluripotency in embryonic stem cells. Required for centromeric localization of CENPA. The chain is Chromodomain-helicase-DNA-binding protein 1 (CHD1) from Gallus gallus (Chicken).